The chain runs to 233 residues: Large ribosomal subunit protein uL1 (233 aa).

The protein belongs to the universal ribosomal protein uL1 family. As to quaternary structure, part of the 50S ribosomal subunit.

Its function is as follows. Binds directly to 23S rRNA. The L1 stalk is quite mobile in the ribosome, and is involved in E site tRNA release. Functionally, protein L1 is also a translational repressor protein, it controls the translation of the L11 operon by binding to its mRNA. The protein is Large ribosomal subunit protein uL1 of Vibrio vulnificus (strain CMCP6).